The following is a 153-amino-acid chain: 3-hydroxyacyl-[acyl-carrier-protein] dehydratase FabZ (153 aa).

H54 is an active-site residue.

This sequence belongs to the thioester dehydratase family. FabZ subfamily.

It is found in the cytoplasm. The catalysed reaction is a (3R)-hydroxyacyl-[ACP] = a (2E)-enoyl-[ACP] + H2O. In terms of biological role, involved in unsaturated fatty acids biosynthesis. Catalyzes the dehydration of short chain beta-hydroxyacyl-ACPs and long chain saturated and unsaturated beta-hydroxyacyl-ACPs. In Shewanella sediminis (strain HAW-EB3), this protein is 3-hydroxyacyl-[acyl-carrier-protein] dehydratase FabZ.